The primary structure comprises 237 residues: Concanavalin V (237 aa).

Residues E8 and D10 each coordinate Mn(2+). Positions 10, 12, 14, and 19 each coordinate Ca(2+). N14 serves as a coordination point for a carbohydrate. Residues D19 and H24 each coordinate Mn(2+). A carbohydrate is bound by residues G70, 98–100 (GLY), D208, and R228.

Belongs to the leguminous lectin family. As to quaternary structure, homotetramer. Concanavalin A-like lectins of the Diocleinae subtribe undergo proteolytic processing referred to as circular permutation. The propeptide is split into an N-terminal and a C-terminal part, the gamma and beta chain, respectively. These are then religated in beta-gamma order to form the mature alpha chain. The beta and gamma chains can often be detected in cell extracts. Residues 1-118 of the mature chain, as displayed here, probably constitute the beta chain in the propeptide, residues 119-237 the gamma chain.

D-mannose/D-glucose-binding lectin which binds alpha-methyl-D-mannoside, D-mannose and D-glucose in that order. Also binds to serum fetuin and ovalbumin. Has hemagglutinating activity towards rabbit erythrocytes. Is not toxic towards larvae of the brine shrimp Artemia. Induces relaxation in rat endothelized aorta. Shows a transient edematogenic effect in rat. The chain is Concanavalin V from Canavalia cathartica (Jackbean).